A 442-amino-acid polypeptide reads, in one-letter code: Methionine aminopeptidase 2 (442 aa).

The interval 1–81 is disordered; sequence MAAQAPTEAL…APTAQSDPPR (81 aa). The span at 56–72 shows a compositional bias: basic residues; it reads PLRRRRRRRRTRKKKKA. Histidine 196 is a substrate binding site. A divalent metal cation-binding residues include aspartate 216, aspartate 227, and histidine 296. Histidine 304 lines the substrate pocket. Glutamate 329 and glutamate 423 together coordinate a divalent metal cation.

Belongs to the peptidase M24A family. Methionine aminopeptidase eukaryotic type 2 subfamily. Co(2+) is required as a cofactor. The cofactor is Zn(2+). Requires Mn(2+) as cofactor. It depends on Fe(2+) as a cofactor.

The protein localises to the cytoplasm. The catalysed reaction is Release of N-terminal amino acids, preferentially methionine, from peptides and arylamides.. Cotranslationally removes the N-terminal methionine from nascent proteins. The N-terminal methionine is often cleaved when the second residue in the primary sequence is small and uncharged (Met-Ala-, Cys, Gly, Pro, Ser, Thr, or Val). This is Methionine aminopeptidase 2 from Verticillium alfalfae (strain VaMs.102 / ATCC MYA-4576 / FGSC 10136) (Verticillium wilt of alfalfa).